Here is a 429-residue protein sequence, read N- to C-terminus: MQESLTLQPIKLINGTLNLPGSKSVSNRALLLAALSEGKTRLTNLLDSDDVRHMLTALAALGVEYHLSSDRTVCEITGLGGAFTASQPLELFLGNAGTAMRPLAAALCLTDGDIVLTGEPRMKERPIGHLVDALRQGGAKIDYLEQENYPPLRLHGGFQGGEISVDGSVSSQFLTALLMTAPLAAQDTQISIQGDLVSKPYIDITLHMMKAFGIEVRNENYQRFFVAGRQQYRSPGDYLVEGDASSASYFLAAAAIKGGVVRVTGVGRNSVQGDIRFADVLERMGAIVRWGEDYIECERGELHAIDMDMNHIPDAAMTIATAALFAQGGTTTLRNIYNWRVKETDRLAAMAIELRKVGAEVEEGNDYIRITPPAKLKAAEIGTYNDHRMAMCFSLVALSDTPVTILDPKCTAKTFPDYFEQLARLSELA.

Positions 23, 24, and 28 each coordinate 3-phosphoshikimate. Lys-23 contacts phosphoenolpyruvate. Phosphoenolpyruvate contacts are provided by Gly-97 and Arg-125. 3-phosphoshikimate-binding residues include Ser-170, Ser-171, Gln-172, Ser-198, Asp-314, Asn-338, and Lys-342. Gln-172 contributes to the phosphoenolpyruvate binding site. The Proton acceptor role is filled by Asp-314. Phosphoenolpyruvate-binding residues include Arg-346, Arg-388, and Lys-413.

This sequence belongs to the EPSP synthase family. Monomer.

The protein localises to the cytoplasm. It catalyses the reaction 3-phosphoshikimate + phosphoenolpyruvate = 5-O-(1-carboxyvinyl)-3-phosphoshikimate + phosphate. Its pathway is metabolic intermediate biosynthesis; chorismate biosynthesis; chorismate from D-erythrose 4-phosphate and phosphoenolpyruvate: step 6/7. Its function is as follows. Catalyzes the transfer of the enolpyruvyl moiety of phosphoenolpyruvate (PEP) to the 5-hydroxyl of shikimate-3-phosphate (S3P) to produce enolpyruvyl shikimate-3-phosphate and inorganic phosphate. This chain is 3-phosphoshikimate 1-carboxyvinyltransferase, found in Pectobacterium carotovorum subsp. carotovorum (strain PC1).